The chain runs to 95 residues: Cytochrome b (95 aa).

3 helical membrane passes run 1–16 (GLCL…FLAM), 40–61 (WLIR…YLHI), and 76–95 (WNIG…VGYV). Heme b-binding residues include histidine 46 and histidine 60.

The protein belongs to the cytochrome b family. As to quaternary structure, the cytochrome bc1 complex contains 3 respiratory subunits (MT-CYB, CYC1 and UQCRFS1), 2 core proteins (UQCRC1 and UQCRC2) and probably 6 low-molecular weight proteins. Requires heme b as cofactor.

Its subcellular location is the mitochondrion inner membrane. Component of the ubiquinol-cytochrome c reductase complex (complex III or cytochrome b-c1 complex) that is part of the mitochondrial respiratory chain. The b-c1 complex mediates electron transfer from ubiquinol to cytochrome c. Contributes to the generation of a proton gradient across the mitochondrial membrane that is then used for ATP synthesis. This Gomphosus varius (Bird wrasse) protein is Cytochrome b (mt-cyb).